A 219-amino-acid chain; its full sequence is Guanylate kinase (219 aa).

The region spanning 15–194 (GLMLVISSPS…AFSSVRAIVE (180 aa)) is the Guanylate kinase-like domain. ATP is bound at residue 22 to 29 (SPSGAGKS).

The protein belongs to the guanylate kinase family.

It is found in the cytoplasm. The enzyme catalyses GMP + ATP = GDP + ADP. Essential for recycling GMP and indirectly, cGMP. The sequence is that of Guanylate kinase from Rhizobium meliloti (strain 1021) (Ensifer meliloti).